We begin with the raw amino-acid sequence, 531 residues long: Fatty acid--[acyl-carrier-protein] ligase MmaC (531 aa).

T169 is a Mg(2+) binding site. Residues I218, V308, and S312 each contribute to the ATP site. Mg(2+) is bound at residue E313. D403 is a binding site for ATP.

It belongs to the ATP-dependent AMP-binding enzyme family. The cofactor is Mg(2+).

The enzyme catalyses a (2E)-enoyl fatty acid + holo-[ACP] + ATP = a (2E)-enoyl-[ACP] + AMP + diphosphate. It carries out the reaction a (2E)-enoyl fatty acid + ATP + H(+) = a (2E)-2-fatty-enoyl-AMP + diphosphate. The catalysed reaction is a (2E)-2-fatty-enoyl-AMP + holo-[ACP] = a (2E)-enoyl-[ACP] + AMP + H(+). It catalyses the reaction (2E)-decenoate + holo-[ACP] + ATP = (2E)-decenoyl-[ACP] + AMP + diphosphate. The enzyme catalyses a (3R)-3-isocyanyl-fatty acid + holo-[ACP] + ATP = a (3R)-3-isocyanyl-fatty acyl-[ACP] + AMP + diphosphate. It carries out the reaction a (3R)-3-isocyanyl-fatty acid + ATP + H(+) = a (3R)-3-isocyanyl-fatty acyl-AMP + diphosphate. The catalysed reaction is a (3R)-3-isocyanyl-fatty acyl-AMP + holo-[ACP] = a (3R)-3-isocyanyl-fatty acyl-[ACP] + AMP + H(+). Its function is as follows. Acyl:acyl-carrier protein ligase involved in the biosynthesis of a unique class of isonitrile lipopeptides (INLPs) that seem to play a role in metal acquisition in M.marinum. Acts twice during the INLP pathway, catalyzing the activation of (2E)-2-decenoate as well as probably the corresponding (3R)-3-isocyanyl-fatty acid as acyl-adenylates (acyl-AMP), and then the acyl transfer to the dedicated acyl-carrier protein MmaB. The polypeptide is Fatty acid--[acyl-carrier-protein] ligase MmaC (Mycobacterium marinum (strain ATCC BAA-535 / M)).